The following is a 410-amino-acid chain: Mating-type locus allele B3 protein (410 aa).

Residues 1-110 (MSRDPKLSLS…ANVVSPGEGC (110 aa)) are variable domain between B alleles. A DNA-binding region (homeobox; TALE-type) is located at residues 107-184 (GEGCRNLSED…NARRRSGWSH (78 aa)). The tract at residues 111-410 (RNLSEDLPAY…PFLCLSVAFV (300 aa)) is highly conserved between B alleles. Disordered regions lie at residues 203 to 224 (AKLSSSNQSTPPSLTSEKPSDD) and 278 to 335 (TPKP…TPEL). Over residues 205 to 219 (LSSSNQSTPPSLTSE) the composition is skewed to polar residues. The Nuclear localization signal motif lies at 276–308 (KKTPKPGMPRPVTTVAKRHPARKTKPAAKPKSR). Positions 291–307 (AKRHPARKTKPAAKPKS) are enriched in basic residues. Over residues 312 to 335 (PRASTTPSIDSTLDSSKLESTPEL) the composition is skewed to polar residues. Positions 333-410 (PELSMCSTAD…PFLCLSVAFV (78 aa)) are not essential for B3 function.

The protein belongs to the TALE/M-ATYP homeobox family.

The protein localises to the nucleus. In terms of biological role, the B locus has at least 25 alleles, and any combination of two different B alleles yields a multimeric regulatory protein, that activates genes responsible for the pathogenicity and for the sexual development of the fungus within the corn plant. This chain is Mating-type locus allele B3 protein, found in Mycosarcoma maydis (Corn smut fungus).